The sequence spans 282 residues: Probable endonuclease 4 (282 aa).

The Zn(2+) site is built by His-66, His-106, Glu-143, Asp-176, His-179, His-213, Asp-226, His-228, and Glu-258.

It belongs to the AP endonuclease 2 family. Zn(2+) is required as a cofactor.

It carries out the reaction Endonucleolytic cleavage to 5'-phosphooligonucleotide end-products.. Endonuclease IV plays a role in DNA repair. It cleaves phosphodiester bonds at apurinic or apyrimidinic (AP) sites, generating a 3'-hydroxyl group and a 5'-terminal sugar phosphate. This is Probable endonuclease 4 from Aquifex aeolicus (strain VF5).